Here is a 571-residue protein sequence, read N- to C-terminus: Peptide-N4-(N-acetyl-beta-glucosaminyl)asparagine amidase A (571 aa).

Residues N121, N143, N197, N241, N318, N367, N390, N423, N457, N481, N524, and N529 are each glycosylated (N-linked (GlcNAc...) asparagine).

As to quaternary structure, heterodimer of a large and a small chain. In terms of processing, is highly glycosylated and is largly resistant against self-deglycosylation.

The enzyme catalyses Hydrolysis of an N(4)-(acetyl-beta-D-glucosaminyl)asparagine residue in which the glucosamine residue may be further glycosylated, to yield a (substituted) N-acetyl-beta-D-glucosaminylamine and a peptide containing an aspartate residue.. The sequence is that of Peptide-N4-(N-acetyl-beta-glucosaminyl)asparagine amidase A from Prunus dulcis (Almond).